Here is a 320-residue protein sequence, read N- to C-terminus: Polycomb complex protein BMI-1-A (320 aa).

The RING-type zinc-finger motif lies at 18–57; that stretch reads CVLCGGYFIDATTIIECLHSFCKMCIVRYLETSKYCPICD. The Nuclear localization signal motif lies at 81–95; that stretch reads KLVPGLFKNEMKRRR. The tract at residues 234 to 320 is disordered; the sequence is ITHPQEGLNN…ALNGSSTSSG (87 aa). Positions 262–281 are enriched in low complexity; that stretch reads VPSTSSPLPSPSTLVQPSQP. The span at 285-304 shows a compositional bias: polar residues; sequence HISSPINGTTMTSPNRQFNF.

Component of a PRC1-like complex. Homodimer. Interacts with cbx2.

Its subcellular location is the nucleus. In terms of biological role, component of a Polycomb group (PcG) multiprotein PRC1-like complex, a complex class required to maintain the transcriptionally repressive state of many genes, including Hox genes, throughout development. PcG PRC1 complex acts via chromatin remodeling and modification of histones; it mediates monoubiquitination of histone H2A 'Lys-119', rendering chromatin heritably changed in its expressibility. In the PRC1 complex, it is required to stimulate the E3 ubiquitin-protein ligase activity of rnf2. The chain is Polycomb complex protein BMI-1-A (bmi1a) from Danio rerio (Zebrafish).